We begin with the raw amino-acid sequence, 367 residues long: 3-dehydroquinate synthase (367 aa).

Residues 69–74, 103–107, 127–128, Lys140, and Lys149 contribute to the NAD(+) site; these read DGEAFK, GVIGD, and TT. Zn(2+) is bound by residues Glu182, His245, and His262.

It belongs to the sugar phosphate cyclases superfamily. Dehydroquinate synthase family. The cofactor is Co(2+). Zn(2+) serves as cofactor. NAD(+) is required as a cofactor.

Its subcellular location is the cytoplasm. The enzyme catalyses 7-phospho-2-dehydro-3-deoxy-D-arabino-heptonate = 3-dehydroquinate + phosphate. It participates in metabolic intermediate biosynthesis; chorismate biosynthesis; chorismate from D-erythrose 4-phosphate and phosphoenolpyruvate: step 2/7. Functionally, catalyzes the conversion of 3-deoxy-D-arabino-heptulosonate 7-phosphate (DAHP) to dehydroquinate (DHQ). The polypeptide is 3-dehydroquinate synthase (Ectopseudomonas mendocina (strain ymp) (Pseudomonas mendocina)).